Here is a 47-residue protein sequence, read N- to C-terminus: Delta-actitoxin-Aspp1a (47 aa).

Intrachain disulfides connect Cys-4/Cys-44, Cys-6/Cys-34, and Cys-27/Cys-45.

It belongs to the sea anemone sodium channel inhibitory toxin family. Type I subfamily.

The protein resides in the secreted. Its subcellular location is the nematocyst. Its function is as follows. Binds specifically to voltage-gated sodium channels (Nav) (site 3), thereby delaying their inactivation during signal transduction. Has a heart stimulation effect on isolated rat atria that is higher than that of Hk7a, Hk8a and Hk16a. The protein is Delta-actitoxin-Aspp1a of Anthopleura sp. (strain 'Zhanjiang') (Sea anemone).